We begin with the raw amino-acid sequence, 363 residues long: MQLGRSGRRSQKQKHEVDEVYFTLTRVDRSCPYLTVPGPPGAESGAPVRLGLRQRAVSSSRNPNSAGRTPNSYLTQAPVWRRSAPAQPPAPQTRHFPGRGADPALGSLPAAGLSGLCARTTGGTAQPPGARDSGASPGAQPQRHRPGCRGPPGSPVIRGPPRCREPGTAHGAQTPPPTRPNWPRRQPSRGSCALSSRQYGERPPAPPWTQPSVPRRGAATWGQEKAEYATPLGTQEARRASGGRGGVDHGDQGLSPCCGDGGARGRRRLPTFWPSGLLRLRLDSLGALPPEPSRAGRGRLFGLSVVLLKRNAGGEATPREGGPRRRWLRESCSPLPARHSRRRASWVSRWMEGAPPRMPSLPL.

The disordered stretch occupies residues 35–262; it reads TVPGPPGAES…GLSPCCGDGG (228 aa). Residues 56 to 75 show a composition bias toward polar residues; sequence AVSSSRNPNSAGRTPNSYLT. Residues 100 to 116 show a composition bias toward low complexity; sequence GADPALGSLPAAGLSGL.

This is an uncharacterized protein from Homo sapiens (Human).